A 676-amino-acid polypeptide reads, in one-letter code: Beta-taxilin (676 aa).

2 disordered regions span residues 1 to 55 (MEND…DISE) and 71 to 131 (AASL…EQKL). Composition is skewed to polar residues over residues 8 to 25 (EKQQ…QGQS) and 34 to 45 (QPLSPTNQTSAQ). A compositionally biased stretch (basic and acidic residues) spans 75-92 (VEKEGTTAETDKPEKEDV). Residues 93–105 (GSMEDAECEDVNE) are compositionally biased toward acidic residues. Residues 106–131 (ESEKDKPAPGDASRAKEPSASKEQKL) show a composition bias toward basic and acidic residues. Residues 157–461 (EEKLDLLFKK…LYRKIKQAQL (305 aa)) adopt a coiled-coil conformation. The disordered stretch occupies residues 464 to 486 (EVNGNDILEEDDDANTNPSSSEQ).

Belongs to the taxilin family. As to expression, specifically expressed in skeletal and cardiac muscle.

Its subcellular location is the cytoplasm. In terms of biological role, promotes neurite-outgrowth. May be involved in intracellular vesicle traffic. This is Beta-taxilin (TXLNB) from Gallus gallus (Chicken).